We begin with the raw amino-acid sequence, 428 residues long: Serine hydroxymethyltransferase (428 aa).

(6S)-5,6,7,8-tetrahydrofolate is bound by residues leucine 127 and 131 to 133 (GHL). Lysine 236 is modified (N6-(pyridoxal phosphate)lysine).

This sequence belongs to the SHMT family. Homodimer. The cofactor is pyridoxal 5'-phosphate.

Its subcellular location is the cytoplasm. It catalyses the reaction (6R)-5,10-methylene-5,6,7,8-tetrahydrofolate + glycine + H2O = (6S)-5,6,7,8-tetrahydrofolate + L-serine. Its pathway is one-carbon metabolism; tetrahydrofolate interconversion. The protein operates within amino-acid biosynthesis; glycine biosynthesis; glycine from L-serine: step 1/1. Its function is as follows. Catalyzes the reversible interconversion of serine and glycine with tetrahydrofolate (THF) serving as the one-carbon carrier. This reaction serves as the major source of one-carbon groups required for the biosynthesis of purines, thymidylate, methionine, and other important biomolecules. Also exhibits THF-independent aldolase activity toward beta-hydroxyamino acids, producing glycine and aldehydes, via a retro-aldol mechanism. In Tropheryma whipplei (strain TW08/27) (Whipple's bacillus), this protein is Serine hydroxymethyltransferase.